Reading from the N-terminus, the 616-residue chain is Chaperone protein HscA (616 aa).

The protein belongs to the heat shock protein 70 family.

Chaperone involved in the maturation of iron-sulfur cluster-containing proteins. Has a low intrinsic ATPase activity which is markedly stimulated by HscB. Involved in the maturation of IscU. This Pectobacterium carotovorum subsp. carotovorum (strain PC1) protein is Chaperone protein HscA.